The chain runs to 121 residues: MVRIAGVNVPDRKHAVVALMSIYGIGKSRARSICLNTGIDEHVQLCKLSEIHIDKLRDAVDEYIVEGDLRREVTLNIKRLIDLGTYRGLRHRRNLPVRGQRTRTNARTCKGPRKSMNKQFK.

Residues 93-121 (RNLPVRGQRTRTNARTCKGPRKSMNKQFK) are disordered. Positions 110 to 121 (KGPRKSMNKQFK) are enriched in basic residues.

Belongs to the universal ribosomal protein uS13 family. In terms of assembly, part of the 30S ribosomal subunit. Forms a loose heterodimer with protein S19. Forms two bridges to the 50S subunit in the 70S ribosome.

Located at the top of the head of the 30S subunit, it contacts several helices of the 16S rRNA. In the 70S ribosome it contacts the 23S rRNA (bridge B1a) and protein L5 of the 50S subunit (bridge B1b), connecting the 2 subunits; these bridges are implicated in subunit movement. Contacts the tRNAs in the A and P-sites. The protein is Small ribosomal subunit protein uS13 of Blochmanniella pennsylvanica (strain BPEN).